A 319-amino-acid chain; its full sequence is Coproporphyrin III ferrochelatase (319 aa).

Fe(2+) contacts are provided by His193 and Glu274.

Belongs to the ferrochelatase family.

The protein localises to the cytoplasm. The catalysed reaction is Fe-coproporphyrin III + 2 H(+) = coproporphyrin III + Fe(2+). It functions in the pathway porphyrin-containing compound metabolism; protoheme biosynthesis. In terms of biological role, involved in coproporphyrin-dependent heme b biosynthesis. Catalyzes the insertion of ferrous iron into coproporphyrin III to form Fe-coproporphyrin III. In Streptococcus mutans serotype c (strain ATCC 700610 / UA159), this protein is Coproporphyrin III ferrochelatase.